Consider the following 467-residue polypeptide: GTPase Der (467 aa).

2 consecutive EngA-type G domains span residues 25 to 188 (PVVA…PEAP) and 199 to 372 (RRVA…ASWE). GTP is bound by residues 31–38 (GRPNVGKS), 78–82 (DTGGW), 140–143 (NKAD), 205–212 (GRPNVGKS), 252–256 (DTAGL), and 317–320 (NKWD). The KH-like domain maps to 373 to 455 (TRVPTAQLNA…PIEISVRARK (83 aa)).

Belongs to the TRAFAC class TrmE-Era-EngA-EngB-Septin-like GTPase superfamily. EngA (Der) GTPase family. As to quaternary structure, associates with the 50S ribosomal subunit.

Its function is as follows. GTPase that plays an essential role in the late steps of ribosome biogenesis. This Salinispora tropica (strain ATCC BAA-916 / DSM 44818 / JCM 13857 / NBRC 105044 / CNB-440) protein is GTPase Der.